The primary structure comprises 655 residues: MGIFSIANQHIRFAVKLACAIVLALFIGFHFQLETPRWAVLTAAIVAAGPAFAAGGEPYSGAIRYRGMLRIIGTFIGCIAALIIIISMIRAPLLMILVCCVWAGFCTWISSLVRIENSYAWGLSGYTALIIVITIQTEPLLTPQFALERCSEIVIGIGCAILADLLFSPRSIKQEVDRELDCLLVAQYQLMQLCIKHGDSEEVDNAWGDLVRRTAALEGMRSNLNMESSRWVRANRRLKALNTLSLTLITQSCETYLIQNTRPELITDTFRELFETPVETVQDVHRQLKRMRRVIVWTGERETPVTLYSWVGAATRYLLLKRGVISNTKISATEEEILQGEPVVKVESAERHHAMVNFWRTTLSCILGTLFWLWTGWTSGNGAMVMIAVVTSLAMRLPNPRMVCIDFIYGTLAALPLGLLYFLVIIPNTQQSMLLLCLSLAVLGFFIGIEVQKRRLGSMGALASTINIIVLDNPMTFHFIQFLDSALGQIVGCMLAFIVILLVRDKSKDRTGRVLLNQFVSAAVSAMTTNVVRRKENRLPALYQQLFLLMNKFPGDLPKFRLALTMIIAHQRLRDAPIPVNEDLSVFHRQLRRTADHVISAGSDDKRRRYFGQLLDELDIYQEKLRIWEAPPQVTEPVKRLTGMLHKYQNALTDS.

Residues 1–12 (MGIFSIANQHIR) lie on the Periplasmic side of the membrane. A helical membrane pass occupies residues 13-33 (FAVKLACAIVLALFIGFHFQL). Residues 34-37 (ETPR) are Cytoplasmic-facing. Residues 38-58 (WAVLTAAIVAAGPAFAAGGEP) traverse the membrane as a helical segment. The Periplasmic segment spans residues 59 to 68 (YSGAIRYRGM). The chain crosses the membrane as a helical span at residues 69–89 (LRIIGTFIGCIAALIIIISMI). Residues 90–92 (RAP) are Cytoplasmic-facing. A helical transmembrane segment spans residues 93–113 (LLMILVCCVWAGFCTWISSLV). Residues 114–120 (RIENSYA) lie on the Periplasmic side of the membrane. A helical transmembrane segment spans residues 121–141 (WGLSGYTALIIVITIQTEPLL). Residues 142 to 151 (TPQFALERCS) are Cytoplasmic-facing. A helical membrane pass occupies residues 152–172 (EIVIGIGCAILADLLFSPRSI). Residues 173-369 (KQEVDRELDC…RTTLSCILGT (197 aa)) lie on the Periplasmic side of the membrane. Residues 370 to 390 (LFWLWTGWTSGNGAMVMIAVV) traverse the membrane as a helical segment. Over 391-406 (TSLAMRLPNPRMVCID) the chain is Cytoplasmic. A helical membrane pass occupies residues 407–427 (FIYGTLAALPLGLLYFLVIIP). Residues 428–430 (NTQ) lie on the Periplasmic side of the membrane. Residues 431-451 (QSMLLLCLSLAVLGFFIGIEV) form a helical membrane-spanning segment. Over 452–459 (QKRRLGSM) the chain is Cytoplasmic. The helical transmembrane segment at 460-480 (GALASTINIIVLDNPMTFHFI) threads the bilayer. Position 481 (Gln-481) is a topological domain, periplasmic. Residues 482 to 502 (FLDSALGQIVGCMLAFIVILL) traverse the membrane as a helical segment. The Cytoplasmic portion of the chain corresponds to 503-655 (VRDKSKDRTG…HKYQNALTDS (153 aa)).

The protein belongs to the aromatic acid exporter ArAE (TC 2.A.85) family.

Its subcellular location is the cell inner membrane. Functionally, forms an efflux pump with AaeA. Could function as a metabolic relief valve, allowing to eliminate certain compounds when they accumulate to high levels in the cell. This chain is p-hydroxybenzoic acid efflux pump subunit AaeB, found in Salmonella typhi.